Here is a 180-residue protein sequence, read N- to C-terminus: uncharacterized protein (180 aa).

Positions 1–22 (MKRSIIAAAVFSSFFMSAGVFA) are cleaved as a signal peptide.

The protein belongs to the fimbrial protein family.

In terms of biological role, part of the yehABCD fimbrial operon. Could contribute to adhesion to various surfaces in specific environmental niches. This is an uncharacterized protein from Escherichia coli (strain K12).